A 166-amino-acid chain; its full sequence is NAD(P)H-quinone oxidoreductase subunit I, chloroplastic (166 aa).

2 consecutive 4Fe-4S ferredoxin-type domains span residues 55–84 (GRIH…VDWK) and 95–124 (LNYS…MTEE). The [4Fe-4S] cluster site is built by C64, C67, C70, C74, C104, C107, C110, and C114.

The protein belongs to the complex I 23 kDa subunit family. As to quaternary structure, NDH is composed of at least 16 different subunits, 5 of which are encoded in the nucleus. [4Fe-4S] cluster is required as a cofactor.

The protein localises to the plastid. Its subcellular location is the chloroplast thylakoid membrane. The catalysed reaction is a plastoquinone + NADH + (n+1) H(+)(in) = a plastoquinol + NAD(+) + n H(+)(out). The enzyme catalyses a plastoquinone + NADPH + (n+1) H(+)(in) = a plastoquinol + NADP(+) + n H(+)(out). In terms of biological role, NDH shuttles electrons from NAD(P)H:plastoquinone, via FMN and iron-sulfur (Fe-S) centers, to quinones in the photosynthetic chain and possibly in a chloroplast respiratory chain. The immediate electron acceptor for the enzyme in this species is believed to be plastoquinone. Couples the redox reaction to proton translocation, and thus conserves the redox energy in a proton gradient. In Melampodium leucanthum (Black foot daisy), this protein is NAD(P)H-quinone oxidoreductase subunit I, chloroplastic.